We begin with the raw amino-acid sequence, 121 residues long: Basic phospholipase A2 homolog BnSP-7 (121 aa).

7 disulfides stabilise this stretch: cysteine 26–cysteine 115, cysteine 28–cysteine 44, cysteine 43–cysteine 95, cysteine 49–cysteine 121, cysteine 50–cysteine 88, cysteine 57–cysteine 81, and cysteine 75–cysteine 86. Residues 105–117 (KKYRYHLKPFCKK) form an important for membrane-damaging activities in eukaryotes and bacteria; heparin-binding region.

Belongs to the phospholipase A2 family. Group II subfamily. K49 sub-subfamily. As to quaternary structure, homodimer; non-covalently linked (probable alternative/compact dimer conformation in solution). Expressed by the venom gland.

Its subcellular location is the secreted. Its activity is regulated as follows. Heparin inhibits the neuromuscular effect, myotoxin activity and edema-inducing effects. Bromophenacyl bromide (BPB) inhibits the neuromuscular effect, the myotoxin activity and edema-inducing effects. Its function is as follows. Snake venom phospholipase A2 (PLA2) that lacks enzymatic activity. Is myotoxic and displays edema-inducing activity. Displays bactericidal activity and promotes the blockage of the neuromuscular contraction of the chick biventer cervicis muscle. Also disrupts artificial membranes, and provokes tissue damages characterized by edema, necrosis and inflammation. May act as pro-inflammatory mediators, inducing metalloproteinase and cytokine production from the inflammatory and satellite cells. A model of myotoxic mechanism has been proposed: an apo Lys49-PLA2 is activated by the entrance of a hydrophobic molecule (e.g. fatty acid) at the hydrophobic channel of the protein leading to a reorientation of a monomer. This reorientation causes a transition between 'inactive' to 'active' states, causing alignment of C-terminal and membrane-docking sites (MDoS) side-by-side and putting the membrane-disruption sites (MDiS) in the same plane, exposed to solvent and in a symmetric position for both monomers. The MDoS region stabilizes the toxin on membrane by the interaction of charged residues with phospholipid head groups. Subsequently, the MDiS region destabilizes the membrane with penetration of hydrophobic residues. This insertion causes a disorganization of the membrane, allowing an uncontrolled influx of ions (i.e. calcium and sodium), and eventually triggering irreversible intracellular alterations and cell death. The protein is Basic phospholipase A2 homolog BnSP-7 of Bothrops pauloensis (Neuwied's lancehead).